The following is a 55-amino-acid chain: MQKRELYEIADGKLVRKHRFCPRCGPGVFLAEHADRFTCGRCGYTEFKKVKKAKS.

The Zn(2+) site is built by cysteine 21, cysteine 24, cysteine 39, and cysteine 42. Residues 21–42 (CPRCGPGVFLAEHADRFTCGRC) form a C4-type zinc finger.

Belongs to the eukaryotic ribosomal protein eS31 family. Part of the 30S ribosomal subunit. Zn(2+) serves as cofactor.

The sequence is that of Small ribosomal subunit protein eS31 from Thermoplasma volcanium (strain ATCC 51530 / DSM 4299 / JCM 9571 / NBRC 15438 / GSS1).